A 390-amino-acid polypeptide reads, in one-letter code: MEEMFKEQDFWSFNESSRNSTVGNETFGGNQTVNPLKRNEEVAKVEVTVLALVLFLALAGNLCVLIAIYTAKHTQSRMYYLMKHLSIADLVVAVFQVLPQLIWDITFRFYGPDFLCRLVKYLQTVGMFASTYMLVLMSIDRCIAICQPLRSLHKRKDRCYVIVSWALSLVFSVPQVYIFSLREIGNGVYDCWGDFVQPWGAKAYITWISLTIYIIPVAILGGCYGLISFKIWQNFKRKTKKDQCITLTTAASKANALARVSSVKLVSKAKITTVKMTFVIVLAYIVCWTPFFFVQMWSAWDPEAPREAMPFIISMLLASLNSCCNPWIYMFFAGHLFHDLKQSLLCCSTLYLKSSQCRCDQEHDSRKSNCSTYVIKSTSSQRSITQSSIT.

At 1-48 (MEEMFKEQDFWSFNESSRNSTVGNETFGGNQTVNPLKRNEEVAKVEVT) the chain is on the extracellular side. Asn14, Asn19, Asn24, and Asn30 each carry an N-linked (GlcNAc...) asparagine glycan. A helical transmembrane segment spans residues 49-69 (VLALVLFLALAGNLCVLIAIY). At 70–86 (TAKHTQSRMYYLMKHLS) the chain is on the cytoplasmic side. A helical transmembrane segment spans residues 87 to 107 (IADLVVAVFQVLPQLIWDITF). Over 108-124 (RFYGPDFLCRLVKYLQT) the chain is Extracellular. A disulfide bond links Cys116 and Cys191. A helical membrane pass occupies residues 125–145 (VGMFASTYMLVLMSIDRCIAI). At 146 to 160 (CQPLRSLHKRKDRCY) the chain is on the cytoplasmic side. A helical transmembrane segment spans residues 161 to 181 (VIVSWALSLVFSVPQVYIFSL). The Extracellular portion of the chain corresponds to 182–206 (REIGNGVYDCWGDFVQPWGAKAYIT). Residues 207 to 227 (WISLTIYIIPVAILGGCYGLI) form a helical membrane-spanning segment. Residues 228–276 (SFKIWQNFKRKTKKDQCITLTTAASKANALARVSSVKLVSKAKITTVKM) are Cytoplasmic-facing. The helical transmembrane segment at 277-297 (TFVIVLAYIVCWTPFFFVQMW) threads the bilayer. Residues 298–311 (SAWDPEAPREAMPF) are Extracellular-facing. A helical transmembrane segment spans residues 312–332 (IISMLLASLNSCCNPWIYMFF). The Cytoplasmic portion of the chain corresponds to 333-390 (AGHLFHDLKQSLLCCSTLYLKSSQCRCDQEHDSRKSNCSTYVIKSTSSQRSITQSSIT).

This sequence belongs to the G-protein coupled receptor 1 family. Vasopressin/oxytocin receptor subfamily. Expressed in brain, intestine, bladder, skeletal muscle, lateral line, gills and kidney.

The protein resides in the cell membrane. In terms of biological role, binds to isotocin. Can also be activated by vasotocin, mesotocin, oxytocin and Arg-vasopressin, although these have lower potencies than isotocin. Produces an induction of membrane chloride currents indicating that it is coupled to the inositol phosphate/calcium pathway. This is Isotocin receptor from Catostomus commersonii (White sucker).